The chain runs to 78 residues: U7-lycotoxin-Ls1a (78 aa).

A signal peptide spans 1–22 (MKLIIFTGLALLLIVSLIDVEA). Positions 23 to 26 (QNEG) are excised as a propeptide.

This sequence belongs to the neurotoxin 19 (CSTX) family. 07 (U7-Lctx) subfamily. Contains 4 disulfide bonds. Expressed by the venom gland.

It localises to the secreted. This Lycosa singoriensis (Wolf spider) protein is U7-lycotoxin-Ls1a.